The chain runs to 102 residues: Small ribosomal subunit protein uS10 (102 aa).

This sequence belongs to the universal ribosomal protein uS10 family. In terms of assembly, part of the 30S ribosomal subunit.

Its function is as follows. Involved in the binding of tRNA to the ribosomes. The polypeptide is Small ribosomal subunit protein uS10 (Bacillus cereus (strain G9842)).